A 524-amino-acid polypeptide reads, in one-letter code: Solute carrier family 2, facilitated glucose transporter member 2 (524 aa).

At 1-6 (MTEDKI) the chain is on the cytoplasmic side. A helical membrane pass occupies residues 7-26 (TGTLVFAVLTAVLGSFQFGY). Over 27–89 (DIGVINAPQQ…SWAEEETTAS (63 aa)) the chain is Extracellular. A glycan (N-linked (GlcNAc...) asparagine) is linked at Asn62. A helical transmembrane segment spans residues 90–115 (ASLIIMLWSLSVSIFAIGGMIASFFG). Over 116–126 (GMLGDRLGRIK) the chain is Cytoplasmic. Residues 127-145 (AMLVANILSLVGALLMWFS) form a helical membrane-spanning segment. Topologically, residues 146–150 (KLGPS) are extracellular. The helical transmembrane segment at 151–176 (HILIISGRGISGLYCGLISGLVPMYI) threads the bilayer. Residues 177–187 (GEIAPTKFRGA) lie on the Cytoplasmic side of the membrane. The chain crosses the membrane as a helical span at residues 188–211 (IGALHQLAIVTGILVSQIIGLDFL). Gln193 contacts D-glucose. Residues 212–216 (LGNHE) are Extracellular-facing. A helical membrane pass occupies residues 217–239 (LWHILLGLSAVPAVLQSLMLFFC). Topologically, residues 240–303 (PESPRYLYIK…LFTNSSYRQP (64 aa)) are cytoplasmic. Residues 304-327 (ILVALMLHMAQQFSGINGIFYYST) form a helical membrane-spanning segment. Residues 314-315 (QQ) and Asn320 contribute to the D-glucose site. Residues 328–338 (SIFQTAGISQP) lie on the Extracellular side of the membrane. Residues 339 to 360 (VYATIGVGAINTIFTALSVFLV) traverse the membrane as a helical segment. A D-glucose-binding site is contributed by Asn349. At 361 to 366 (EKAGRR) the chain is on the cytoplasmic side. The helical transmembrane segment at 367 to 389 (SLFLIGMSGMFVCAIFMSVGLVL) threads the bilayer. The Extracellular segment spans residues 390–394 (LDKLP). The chain crosses the membrane as a helical span at residues 395–413 (WMSYVSMTAIFLFVSFFEI). Glu412 and Trp420 together coordinate D-glucose. The Cytoplasmic segment spans residues 414–433 (GPGPIPWFMVAEFFSQGPRP). Residues 434 to 458 (AALAMAAFSNWTCNFIIALCFQYIA) form a helical membrane-spanning segment. The Extracellular portion of the chain corresponds to 459-463 (DFCGP). The helical transmembrane segment at 464–482 (YVFFLFAGVVLVFTLFTFF) threads the bilayer. Residues 483–524 (KVPETKGKSFEEIAAEFQKKSGSAQSPKAAVEMEFLGATETV) are Cytoplasmic-facing. At Thr523 the chain carries Phosphothreonine.

Belongs to the major facilitator superfamily. Sugar transporter (TC 2.A.1.1) family. Glucose transporter subfamily. In terms of processing, N-glycosylated; required for stability and retention at the cell surface of pancreatic beta cells.

Its subcellular location is the cell membrane. It carries out the reaction D-glucose(out) = D-glucose(in). It catalyses the reaction D-fructose(out) = D-fructose(in). The catalysed reaction is L-dehydroascorbate(out) = L-dehydroascorbate(in). The enzyme catalyses D-galactose(in) = D-galactose(out). With respect to regulation, D-glucose and maltose competitively inhibit fructose transport. D-glucose, D-fructose and maltose inhibit deoxyglucose transport. Facilitative hexose transporter that mediates the transport of glucose, fructose and galactose. Likely mediates the bidirectional transfer of glucose across the plasma membrane of hepatocytes and is responsible for uptake of glucose by the beta cells; may comprise part of the glucose-sensing mechanism of the beta cell. May also participate with the Na(+)/glucose cotransporter in the transcellular transport of glucose in the small intestine and kidney. Also able to mediate the transport of dehydroascorbate. The chain is Solute carrier family 2, facilitated glucose transporter member 2 from Sus scrofa (Pig).